We begin with the raw amino-acid sequence, 373 residues long: Chorismate synthase (373 aa).

R46 lines the NADP(+) pocket. FMN-binding positions include 123-125 (RSS), 250-251 (NA), G295, 310-314 (KPTPS), and R337.

The protein belongs to the chorismate synthase family. FMNH2 serves as cofactor.

The enzyme catalyses 5-O-(1-carboxyvinyl)-3-phosphoshikimate = chorismate + phosphate. It functions in the pathway metabolic intermediate biosynthesis; chorismate biosynthesis; chorismate from D-erythrose 4-phosphate and phosphoenolpyruvate: step 7/7. Catalyzes the anti-1,4-elimination of the C-3 phosphate and the C-6 proR hydrogen from 5-enolpyruvylshikimate-3-phosphate (EPSP) to yield chorismate, which is the branch point compound that serves as the starting substrate for the three terminal pathways of aromatic amino acid biosynthesis. This reaction introduces a second double bond into the aromatic ring system. In Methanococcus aeolicus (strain ATCC BAA-1280 / DSM 17508 / OCM 812 / Nankai-3), this protein is Chorismate synthase.